The primary structure comprises 197 residues: Small ribosomal subunit protein eS1 (197 aa).

Belongs to the eukaryotic ribosomal protein eS1 family.

The chain is Small ribosomal subunit protein eS1 from Sulfolobus acidocaldarius (strain ATCC 33909 / DSM 639 / JCM 8929 / NBRC 15157 / NCIMB 11770).